The following is a 498-amino-acid chain: Probable malate:quinone oxidoreductase 2 (498 aa).

Belongs to the MQO family. Requires FAD as cofactor.

It catalyses the reaction (S)-malate + a quinone = a quinol + oxaloacetate. It functions in the pathway carbohydrate metabolism; tricarboxylic acid cycle; oxaloacetate from (S)-malate (quinone route): step 1/1. This chain is Probable malate:quinone oxidoreductase 2, found in Staphylococcus aureus (strain COL).